The sequence spans 219 residues: Response regulator ArlR (219 aa).

The Response regulatory domain occupies 3-116 (NILIVEDEQN…ELFARIRAVL (114 aa)). 4-aspartylphosphate is present on Asp52. The segment at residues 122–219 (KDIIDINGIK…TVRGVGYVIR (98 aa)) is a DNA-binding region (ompR/PhoB-type).

Phosphorylated by ArlS.

It is found in the cytoplasm. Member of the two-component regulatory system ArlS/ArlR. The polypeptide is Response regulator ArlR (arlR) (Staphylococcus haemolyticus (strain JCSC1435)).